Here is a 484-residue protein sequence, read N- to C-terminus: Ribosomal RNA small subunit methyltransferase F (484 aa).

S-adenosyl-L-methionine is bound by residues 119-125, glutamate 143, aspartate 170, and aspartate 188; that span reads ASAPGSK. Cysteine 241 (nucleophile) is an active-site residue.

This sequence belongs to the class I-like SAM-binding methyltransferase superfamily. RsmB/NOP family.

It localises to the cytoplasm. It carries out the reaction cytidine(1407) in 16S rRNA + S-adenosyl-L-methionine = 5-methylcytidine(1407) in 16S rRNA + S-adenosyl-L-homocysteine + H(+). Specifically methylates the cytosine at position 1407 (m5C1407) of 16S rRNA. This chain is Ribosomal RNA small subunit methyltransferase F, found in Shewanella frigidimarina (strain NCIMB 400).